The chain runs to 84 residues: uncharacterized protein (84 aa).

This is an uncharacterized protein from Acidianus convivator (ATV).